Here is a 282-residue protein sequence, read N- to C-terminus: Bifunctional protein FolD (282 aa).

NADP(+) is bound by residues 164 to 166 and Ser-189; that span reads GRS.

It belongs to the tetrahydrofolate dehydrogenase/cyclohydrolase family. As to quaternary structure, homodimer.

It carries out the reaction (6R)-5,10-methylene-5,6,7,8-tetrahydrofolate + NADP(+) = (6R)-5,10-methenyltetrahydrofolate + NADPH. It catalyses the reaction (6R)-5,10-methenyltetrahydrofolate + H2O = (6R)-10-formyltetrahydrofolate + H(+). It functions in the pathway one-carbon metabolism; tetrahydrofolate interconversion. Functionally, catalyzes the oxidation of 5,10-methylenetetrahydrofolate to 5,10-methenyltetrahydrofolate and then the hydrolysis of 5,10-methenyltetrahydrofolate to 10-formyltetrahydrofolate. The polypeptide is Bifunctional protein FolD (Lactobacillus helveticus (strain DPC 4571)).